Here is a 478-residue protein sequence, read N- to C-terminus: 5-hydroxytryptamine receptor 3A (478 aa).

The signal sequence occupies residues 1-23; that stretch reads MLLWVQQALLALLLPTLLAQGEA. Residues 24–241 are Extracellular-facing; sequence RRSRNTTRPA…MKFYVVIRRR (218 aa). N-linked (GlcNAc...) asparagine glycosylation is found at Asn-28, Asn-104, Asn-170, and Asn-186. Cys-157 and Cys-171 are oxidised to a cystine. Residues 242-268 traverse the membrane as a helical segment; the sequence is PLFYVVSLLLPSIFLMVMDIVGFYLPP. Topologically, residues 269-273 are cytoplasmic; the sequence is NSGER. A helical membrane pass occupies residues 274–292; that stretch reads VSFKITLLLGYSVFLIIVS. Residues 293–302 are Extracellular-facing; the sequence is DTLPATAIGT. A helical transmembrane segment spans residues 303 to 321; the sequence is PLIGVYFVVCMALLVISLA. Topologically, residues 322–455 are cytoplasmic; it reads ETIFIVRLVH…GSVLDKLLFH (134 aa). Residues 389–408 are disordered; that stretch reads GGPQDFEKSPRDRCSPPPPP. Basic and acidic residues predominate over residues 393–402; the sequence is DFEKSPRDRC. The tract at residues 414–450 is HA-stretch; determines single-channel conductance in 5-HT3 receptors; that stretch reads AVCGLLQELSSIRQFLEKRDEIREVARDWLRVGSVLD. The helical transmembrane segment at 456–475 threads the bilayer; sequence IYLLAVLAYSITLVMLWSIW. At 476–478 the chain is on the extracellular side; that stretch reads QYA.

Belongs to the ligand-gated ion channel (TC 1.A.9) family. 5-hydroxytryptamine receptor (TC 1.A.9.2) subfamily. HTR3A sub-subfamily. Forms homopentameric as well as heteropentameric serotonin-activated cation-selective channel complexes with HTR3B or HTR3C or HTR3D or HTR3E. The homomeric complex is functional but exhibits low conductance with modified voltage dependence, and decreased agonist and antagonist affinity. Heteropentameric complexes display properties which resemble that of neuronal serotonin-activated channels in vivo. Interacts with RIC3. As to expression, expressed in cerebral cortex, amygdala, hippocampus, and testis. Detected in monocytes of the spleen and tonsil, in small and large intestine, uterus, prostate, ovary and placenta.

The protein resides in the postsynaptic cell membrane. It is found in the cell membrane. The catalysed reaction is Na(+)(in) = Na(+)(out). It carries out the reaction K(+)(in) = K(+)(out). It catalyses the reaction Ca(2+)(in) = Ca(2+)(out). The enzyme catalyses Mg(2+)(in) = Mg(2+)(out). In terms of biological role, forms serotonin (5-hydroxytryptamine/5-HT3)-activated cation-selective channel complexes, which when activated cause fast, depolarizing responses in neurons. This Homo sapiens (Human) protein is 5-hydroxytryptamine receptor 3A.